We begin with the raw amino-acid sequence, 455 residues long: Putative non-structural protein (455 aa).

The span at 262-276 (KERKTTHKTLVEDTH) shows a compositional bias: basic and acidic residues. The tract at residues 262–341 (KERKTTHKTL…GVLTKKKSLK (80 aa)) is disordered.

The chain is Putative non-structural protein from Bombyx mori (Silk moth).